The primary structure comprises 366 residues: Anhydro-N-acetylmuramic acid kinase (366 aa).

12-19 provides a ligand contact to ATP; it reads GTSLDGID.

Belongs to the anhydro-N-acetylmuramic acid kinase family.

It catalyses the reaction 1,6-anhydro-N-acetyl-beta-muramate + ATP + H2O = N-acetyl-D-muramate 6-phosphate + ADP + H(+). Its pathway is amino-sugar metabolism; 1,6-anhydro-N-acetylmuramate degradation. The protein operates within cell wall biogenesis; peptidoglycan recycling. Its function is as follows. Catalyzes the specific phosphorylation of 1,6-anhydro-N-acetylmuramic acid (anhMurNAc) with the simultaneous cleavage of the 1,6-anhydro ring, generating MurNAc-6-P. Is required for the utilization of anhMurNAc either imported from the medium or derived from its own cell wall murein, and thus plays a role in cell wall recycling. This chain is Anhydro-N-acetylmuramic acid kinase, found in Nitrosospira multiformis (strain ATCC 25196 / NCIMB 11849 / C 71).